Reading from the N-terminus, the 456-residue chain is GTPase Der (456 aa).

2 EngA-type G domains span residues 4–169 and 178–353; these read PVVA…PSKD and VQLA…DQSR. GTP contacts are provided by residues 10 to 17, 57 to 61, 120 to 123, 184 to 191, 231 to 235, and 296 to 299; these read GRPNVGKS, DTGGL, NKCE, DTAGI, and NKWD. The KH-like domain occupies 354–439; it reads RRVTTSVVNE…PIKLFWRGKQ (86 aa).

It belongs to the TRAFAC class TrmE-Era-EngA-EngB-Septin-like GTPase superfamily. EngA (Der) GTPase family. Associates with the 50S ribosomal subunit.

GTPase that plays an essential role in the late steps of ribosome biogenesis. This is GTPase Der from Prochlorococcus marinus (strain NATL1A).